We begin with the raw amino-acid sequence, 147 residues long: MALQRTQAFLLLLLLTLLGLGLVQPSYGQDRMYQRFLRQHVDPDETGGNDSYCNLMMQRRKMTSHQCKRFNTFIHEDLWNIRSICSTTNIQCKNGQMNCHEGVVRVTDCRETGSSRAPNCRYRAKASTRRVVIACEGNPEVPVHFDK.

A signal peptide spans 1–28 (MALQRTQAFLLLLLLTLLGLGLVQPSYG). The residue at position 29 (Gln29) is a Pyrrolidone carboxylic acid. DUMP-binding residues include Arg35, His40, Lys68, Asn71, and Thr72. Residue His40 is the Proton acceptor of the active site. Intrachain disulfides connect Cys53/Cys109, Cys67/Cys120, Cys85/Cys135, and Cys92/Cys99. His144 functions as the Proton donor in the catalytic mechanism. Residue Phe145 participates in dUMP binding.

This sequence belongs to the pancreatic ribonuclease family.

The protein resides in the secreted. Its function is as follows. Cleaves preferentially after uridine bases. Has antimicrobial activity against uropathogenic E.coli (UPEC). Probably contributes to urinary tract sterility. The polypeptide is Ribonuclease 4 (RNASE4) (Bos taurus (Bovine)).